We begin with the raw amino-acid sequence, 446 residues long: Argininosuccinate synthase (446 aa).

ATP-binding positions include 17–25 and Ala-43; that span reads AFSGGLDTS. Tyr-99 is an L-citrulline binding site. ATP contacts are provided by Gly-129 and Thr-131. Thr-131, Asn-135, and Asp-136 together coordinate L-aspartate. Position 135 (Asn-135) interacts with L-citrulline. Asp-136 is an ATP binding site. 2 residues coordinate L-citrulline: Arg-139 and Ser-192. An ATP-binding site is contributed by Asp-194. Positions 201, 203, and 280 each coordinate L-citrulline.

Belongs to the argininosuccinate synthase family. Type 2 subfamily. As to quaternary structure, homotetramer.

The protein resides in the cytoplasm. The enzyme catalyses L-citrulline + L-aspartate + ATP = 2-(N(omega)-L-arginino)succinate + AMP + diphosphate + H(+). Its pathway is amino-acid biosynthesis; L-arginine biosynthesis; L-arginine from L-ornithine and carbamoyl phosphate: step 2/3. The protein is Argininosuccinate synthase of Burkholderia mallei (strain NCTC 10247).